A 479-amino-acid chain; its full sequence is Alliin lyase (479 aa).

Residues Met1–Ser25 form the signal peptide. A propeptide spanning residues Phe26–Ala34 is cleaved from the precursor. The EGF-like; atypical domain occupies Glu47 to Ala93. N-linked (GlcNAc...) asparagine glycosylation occurs at Asn53. Cystine bridges form between Cys54/Cys73, Cys75/Cys84, and Cys78/Cys91. Tyr126 to Phe134 contributes to the chloride binding site. Residues Asn180 and Asn225 are each glycosylated (N-linked (GlcNAc...) asparagine). Lys285 carries the N6-(pyridoxal phosphate)lysine modification. N-linked (GlcNAc...) asparagine glycans are attached at residues Asn342 and Asn362. A disulfide bond links Cys402 and Cys410.

It belongs to the alliinase family. In terms of assembly, homodimer. Pyridoxal 5'-phosphate serves as cofactor.

It is found in the vacuole. The catalysed reaction is an S-alkyl-L-cysteine S-oxide = an S-alkyl sulfenate + 2-aminoprop-2-enoate. In Allium cepa (Onion), this protein is Alliin lyase.